The primary structure comprises 435 residues: Gamma-glutamyl phosphate reductase (435 aa).

It belongs to the gamma-glutamyl phosphate reductase family.

Its subcellular location is the cytoplasm. It carries out the reaction L-glutamate 5-semialdehyde + phosphate + NADP(+) = L-glutamyl 5-phosphate + NADPH + H(+). Its pathway is amino-acid biosynthesis; L-proline biosynthesis; L-glutamate 5-semialdehyde from L-glutamate: step 2/2. Functionally, catalyzes the NADPH-dependent reduction of L-glutamate 5-phosphate into L-glutamate 5-semialdehyde and phosphate. The product spontaneously undergoes cyclization to form 1-pyrroline-5-carboxylate. The polypeptide is Gamma-glutamyl phosphate reductase (Aquifex aeolicus (strain VF5)).